The following is a 947-amino-acid chain: ATPase 10, plasma membrane-type (947 aa).

Residues Met-1–Phe-69 are Cytoplasmic-facing. A helical transmembrane segment spans residues Leu-70–Ile-89. At Ala-90–Trp-101 the chain is on the extracellular side. A helical transmembrane segment spans residues Glu-102–Glu-122. Over Asn-123–Ile-251 the chain is Cytoplasmic. The chain crosses the membrane as a helical span at residues Gly-252 to Pro-272. Over Val-273 to Gly-281 the chain is Extracellular. A helical transmembrane segment spans residues Ile-282–Thr-299. Topologically, residues Val-300 to Arg-650 are cytoplasmic. The active-site 4-aspartylphosphate intermediate is Asp-337. Positions 595 and 599 each coordinate Mg(2+). The chain crosses the membrane as a helical span at residues Asn-651–Leu-672. Residues Ile-673–Asp-677 are Extracellular-facing. The helical transmembrane segment at Phe-678–Asp-700 threads the bilayer. The Cytoplasmic segment spans residues Arg-701 to Ile-716. The chain crosses the membrane as a helical span at residues Phe-717–Ile-737. At Ile-738–Glu-758 the chain is on the extracellular side. The helical transmembrane segment at Gln-759–Thr-779 threads the bilayer. Topologically, residues Arg-780–Gly-791 are cytoplasmic. Residues Thr-792 to Ala-812 form a helical membrane-spanning segment. The Extracellular portion of the chain corresponds to Asn-813–Thr-820. A helical membrane pass occupies residues Gly-821–Leu-841. Residues Asp-842 to Val-947 are Cytoplasmic-facing. Residues Ser-897 and Ser-929 each carry the phosphoserine modification. At Thr-946 the chain carries Phosphothreonine.

It belongs to the cation transport ATPase (P-type) (TC 3.A.3) family. Type IIIA subfamily. In terms of tissue distribution, found primarily in developing seeds. Expressed in guard cells, mesophyll cells, leaves and roots.

It localises to the membrane. The catalysed reaction is ATP + H2O + H(+)(in) = ADP + phosphate + 2 H(+)(out). The plasma membrane H(+) ATPase of plants and fungi generates a proton gradient that drives the active transport of nutrients by H(+)-symport. The resulting external acidification and/or internal alkinization may mediate growth responses. The sequence is that of ATPase 10, plasma membrane-type (AHA10) from Arabidopsis thaliana (Mouse-ear cress).